The primary structure comprises 607 residues: UvrABC system protein C (607 aa).

The GIY-YIG domain maps to 12–91; it reads DSPGVYLYKD…IKRYRPRYNI (80 aa). Positions 200–235 constitute a UVR domain; sequence ENLIKKLKKEMAIASDNLEFERAAKLRDQILALEKI.

This sequence belongs to the UvrC family. In terms of assembly, interacts with UvrB in an incision complex.

It localises to the cytoplasm. Functionally, the UvrABC repair system catalyzes the recognition and processing of DNA lesions. UvrC both incises the 5' and 3' sides of the lesion. The N-terminal half is responsible for the 3' incision and the C-terminal half is responsible for the 5' incision. The chain is UvrABC system protein C from Carboxydothermus hydrogenoformans (strain ATCC BAA-161 / DSM 6008 / Z-2901).